A 510-amino-acid chain; its full sequence is GMP synthase [glutamine-hydrolyzing] (510 aa).

Residues 5-195 (LVIVVDFGGQ…LFDICNLKGD (191 aa)) enclose the Glutamine amidotransferase type-1 domain. The active-site Nucleophile is Cys82. Catalysis depends on residues His169 and Glu171. The GMPS ATP-PPase domain occupies 196 to 385 (WSMSSFVDEK…LGIPHKLVWR (190 aa)). 223 to 229 (SGGVDSS) is a binding site for ATP.

Homodimer.

The catalysed reaction is XMP + L-glutamine + ATP + H2O = GMP + L-glutamate + AMP + diphosphate + 2 H(+). It functions in the pathway purine metabolism; GMP biosynthesis; GMP from XMP (L-Gln route): step 1/1. In terms of biological role, catalyzes the synthesis of GMP from XMP. The polypeptide is GMP synthase [glutamine-hydrolyzing] (Clostridium kluyveri (strain NBRC 12016)).